The sequence spans 144 residues: Mannitol-specific phosphotransferase enzyme IIA component (144 aa).

The PTS EIIA type-2 domain occupies glutamate 3 to alanine 142. Histidine 63 serves as the catalytic Tele-phosphohistidine intermediate. Position 63 is a phosphohistidine; by HPr (histidine 63).

Homodimer or homotrimer. Seems to be a monomer when not phosphorylated.

The protein localises to the cytoplasm. Its function is as follows. The phosphoenolpyruvate-dependent sugar phosphotransferase system (sugar PTS), a major carbohydrate active transport system, catalyzes the phosphorylation of incoming sugar substrates concomitantly with their translocation across the cell membrane. The enzyme II CmtAB PTS system is involved in D-mannitol transport. The sequence is that of Mannitol-specific phosphotransferase enzyme IIA component (mtlF) from Staphylococcus aureus (strain COL).